A 62-amino-acid polypeptide reads, in one-letter code: Ubiquinol-cytochrome c reductase complex 6.7 kDa protein (62 aa).

Over 2 to 25 (TSPAAAGNGLFKFLRPKLRPQSTD) the chain is Mitochondrial matrix. Residues 26–44 (IQAAAGWGVAAVTGALWVI) traverse the membrane as a helical segment. Residues 45 to 62 (QPWDFLRKTFIEKQEEEK) are Mitochondrial intermembrane-facing.

It belongs to the UQCR11/QCR10 family. As to quaternary structure, component of the ubiquinol-cytochrome c oxidoreductase (cytochrome b-c1 complex, complex III, CIII), a multisubunit enzyme composed of 3 respiratory subunits cytochrome b, cytochrome c1 and Rieske protein, 2 core protein subunits, and additional low-molecular weight protein subunits. The complex exists as an obligatory dimer and forms supercomplexes (SCs) in the inner mitochondrial membrane with cytochrome c oxidase (complex IV, CIV).

It localises to the mitochondrion inner membrane. Functionally, component of the ubiquinol-cytochrome c oxidoreductase, a multisubunit transmembrane complex that is part of the mitochondrial electron transport chain which drives oxidative phosphorylation. The respiratory chain contains 3 multisubunit complexes succinate dehydrogenase (complex II, CII), ubiquinol-cytochrome c oxidoreductase (cytochrome b-c1 complex, complex III, CIII) and cytochrome c oxidase (complex IV, CIV), that cooperate to transfer electrons derived from NADH and succinate to molecular oxygen, creating an electrochemical gradient over the inner membrane that drives transmembrane transport and the ATP synthase. The cytochrome b-c1 complex catalyzes electron transfer from ubiquinol to cytochrome c, linking this redox reaction to translocation of protons across the mitochondrial inner membrane, with protons being carried across the membrane as hydrogens on the quinol. In the process called Q cycle, 2 protons are consumed from the matrix, 4 protons are released into the intermembrane space and 2 electrons are passed to cytochrome c. QCR10 has a role in CIII assembly and RIP1 stability. The protein is Ubiquinol-cytochrome c reductase complex 6.7 kDa protein of Solanum tuberosum (Potato).